The sequence spans 198 residues: Imidazoleglycerol-phosphate dehydratase (198 aa).

Belongs to the imidazoleglycerol-phosphate dehydratase family.

Its subcellular location is the cytoplasm. The enzyme catalyses D-erythro-1-(imidazol-4-yl)glycerol 3-phosphate = 3-(imidazol-4-yl)-2-oxopropyl phosphate + H2O. Its pathway is amino-acid biosynthesis; L-histidine biosynthesis; L-histidine from 5-phospho-alpha-D-ribose 1-diphosphate: step 6/9. This Streptomyces griseus subsp. griseus (strain JCM 4626 / CBS 651.72 / NBRC 13350 / KCC S-0626 / ISP 5235) protein is Imidazoleglycerol-phosphate dehydratase.